The primary structure comprises 811 residues: Transmembrane protease serine 6 (811 aa).

The Cytoplasmic portion of the chain corresponds to 1–55; the sequence is MLLLFHSKRMPVAEAPQVAGGQGDGGDGEEAEPEGMFKACEDSKRKARGYLRLVP. Residues 56 to 76 traverse the membrane as a helical; Signal-anchor for type II membrane protein segment; sequence LFVLLALLVLASAGVLLWYFL. Residues 77-811 are Extracellular-facing; the sequence is GYKAEVMVSQ…VISWIQQVVT (735 aa). Residues 84-209 form the SEA domain; that stretch reads VSQVYSGSLR…EGLVILEASV (126 aa). Asparagine 136, asparagine 184, asparagine 216, asparagine 338, asparagine 433, and asparagine 453 each carry an N-linked (GlcNAc...) asparagine glycan. 2 CUB domains span residues 213-336 and 335-452; these read AALN…QACE and CEVN…YGLY. Cysteine 335 and cysteine 366 are joined by a disulfide. LDL-receptor class A domains follow at residues 457-489, 490-526, and 530-567; these read PCPGEFLCSVNGLCVPACDGVKDCPNGLDERNC, VCRATFQCKEDSTCISLPKVCDGQPDCLNGSDEEQCQ, and PCGTFTFQCEDRSCVKKPNPQCDGRPDCRDGSDEEHCD. Cystine bridges form between cysteine 458–cysteine 470, cysteine 464–cysteine 480, cysteine 474–cysteine 489, cysteine 491–cysteine 503, cysteine 497–cysteine 516, cysteine 510–cysteine 525, cysteine 531–cysteine 543, cysteine 538–cysteine 557, cysteine 551–cysteine 566, and cysteine 602–cysteine 618. N-linked (GlcNAc...) asparagine glycosylation is present at asparagine 518. A Peptidase S1 domain is found at 577 to 811; it reads IVGGAVSSEG…VISWIQQVVT (235 aa). Residues histidine 617 and aspartate 668 each act as charge relay system in the active site. 3 cysteine pairs are disulfide-bonded: cysteine 702–cysteine 768, cysteine 733–cysteine 747, and cysteine 758–cysteine 787. Residue serine 762 is the Charge relay system of the active site.

The protein belongs to the peptidase S1 family. In terms of assembly, interacts with HJV. Post-translationally, the single-chain zymogen undergoes autoproteolytic processing. This results in TMPRSS6 shedding from the cell surface and conversion into an activated two-chains form which is released extracellularly. The process involves a trans-activation mechanism that requires TMPRSS6 oligomerization.

The protein localises to the cell membrane. Its function is as follows. Membrane-bound serine protease. Through the cleavage of cell surface hemojuvelin (HJV), a regulator of the expression of the iron absorption-regulating hormone hepicidin/HAMP, plays a role in iron homeostasis. This is Transmembrane protease serine 6 (TMPRSS6) from Homo sapiens (Human).